We begin with the raw amino-acid sequence, 267 residues long: 2-keto-3-deoxy-L-rhamnonate aldolase (267 aa).

Residue histidine 49 is the Proton acceptor of the active site. Glutamine 151 serves as a coordination point for substrate. Glutamate 153 is a binding site for Mg(2+). Positions 178 and 179 each coordinate substrate. Aspartate 179 is a Mg(2+) binding site.

Belongs to the HpcH/HpaI aldolase family. KDR aldolase subfamily. As to quaternary structure, homohexamer. It depends on Mg(2+) as a cofactor.

The enzyme catalyses 2-dehydro-3-deoxy-L-rhamnonate = (S)-lactaldehyde + pyruvate. Catalyzes the reversible retro-aldol cleavage of 2-keto-3-deoxy-L-rhamnonate (KDR) to pyruvate and lactaldehyde. In Shigella dysenteriae serotype 1 (strain Sd197), this protein is 2-keto-3-deoxy-L-rhamnonate aldolase.